The primary structure comprises 233 residues: Low affinity immunoglobulin gamma Fc region receptor III-B (233 aa).

The first 16 residues, 1 to 16, serve as a signal peptide directing secretion; that stretch reads MWQLLLPTALLLLVSA. 2 consecutive Ig-like C2-type domains span residues 40–96 and 121–179; these read KDSV…LSTL and EDPI…VGSK. C47 and C89 are joined by a disulfide. Residues N56, N63, N82, and N92 are each glycosylated (N-linked (GlcNAc...) asparagine). C128 and C172 are disulfide-bonded. 2 N-linked (GlcNAc...) asparagine glycosylation sites follow: N180 and N187. A lipid anchor (GPI-anchor amidated serine) is attached at S200. The propeptide at 201–233 is removed in mature form; sequence SFSPPGYQVSFCLVMVLLFAVDTGLYFSVKTNI.

Monomer. Interacts with INPP5D/SHIP1. In terms of processing, glycosylated. Glycosylation plays an inhibitory role in the interaction with IgG3. Post-translationally, the soluble form is produced by a proteolytic cleavage. As to expression, expressed specifically by polymorphonuclear leukocytes (neutrophils). Also expressed by stimulated eosinophils.

Its subcellular location is the cell membrane. It is found in the secreted. Functionally, receptor for the Fc region of immunoglobulins gamma. Low affinity receptor. Binds complexed or aggregated IgG and also monomeric IgG. Contrary to III-A, is not capable to mediate antibody-dependent cytotoxicity and phagocytosis. May serve as a trap for immune complexes in the peripheral circulation which does not activate neutrophils. In Homo sapiens (Human), this protein is Low affinity immunoglobulin gamma Fc region receptor III-B (FCGR3B).